The sequence spans 136 residues: Probable glycine cleavage system H protein 3 (136 aa).

A Lipoyl-binding domain is found at 28-109 (MVTVGITSLG…PYDAWIVKIK (82 aa)). N6-lipoyllysine is present on lysine 69.

This sequence belongs to the GcvH family. In terms of assembly, the glycine cleavage system is composed of four proteins: P, T, L and H. (R)-lipoate is required as a cofactor.

Functionally, the glycine cleavage system catalyzes the degradation of glycine. The H protein shuttles the methylamine group of glycine from the P protein to the T protein. This is Probable glycine cleavage system H protein 3 from Sulfurisphaera tokodaii (strain DSM 16993 / JCM 10545 / NBRC 100140 / 7) (Sulfolobus tokodaii).